The following is a 129-amino-acid chain: Small ribosomal subunit protein uS9 (129 aa).

The segment at 107 to 129 (SRTVERKKYGRRKARRSPQFSKR) is disordered. Positions 114-129 (KYGRRKARRSPQFSKR) are enriched in basic residues.

Belongs to the universal ribosomal protein uS9 family.

This chain is Small ribosomal subunit protein uS9, found in Campylobacter jejuni subsp. jejuni serotype O:23/36 (strain 81-176).